The sequence spans 349 residues: Protein RAE1 (349 aa).

The tract at residues Met1–Thr21 is disordered. An N-acetylalanine modification is found at Ala2. A compositionally biased stretch (polar residues) spans Thr9 to Thr21. WD repeat units follow at residues Ser23–Ala62, Ser70–Thr109, Met112–Thr151, Gln153–Lys190, and Asn244–Ala283. The DWD box motif lies at Leu128–Arg144.

This sequence belongs to the WD repeat rae1 family. In terms of assembly, part of the nuclear pore complex (NPC). The NPC has an eight-fold symmetrical structure comprising a central transport channel and two rings, the cytoplasmic and nuclear rings, to which eight filaments are attached. The cytoplasmic filaments have loose ends, while the nuclear filaments are joined in a distal ring, forming a nuclear basket. NPCs are highly dynamic in configuration and composition, and can be devided in 3 subcomplexes, the NUP62 subcomplex, the NUP107-160 subcomplex and the NUP93 subcomplex, containing approximately 30 different nucleoporin proteins. Interacts with DDB1A.

The protein localises to the nucleus envelope. It localises to the nucleus. Its subcellular location is the nuclear pore complex. This is Protein RAE1 from Arabidopsis thaliana (Mouse-ear cress).